A 208-amino-acid chain; its full sequence is Small ribosomal subunit protein uS9c (208 aa).

A chloroplast-targeting transit peptide spans 1 to 51; that stretch reads MAVSISSLTSSFASLSFTSNLTPKPQTLPMARTKPFSLSNPAVVKPLVITA. T52 is modified (N-acetylthreonine). A disordered region spans residues 185 to 208; the sequence is DSRIVERKKPGLKKARKAPQFSKR. Positions 194–208 are enriched in basic residues; that stretch reads PGLKKARKAPQFSKR.

As to quaternary structure, component of the chloroplast small ribosomal subunit (SSU). Mature 70S chloroplast ribosomes of higher plants consist of a small (30S) and a large (50S) subunit. The 30S small subunit contains 1 molecule of ribosomal RNA (16S rRNA) and 24 different proteins. The 50S large subunit contains 3 rRNA molecules (23S, 5S and 4.5S rRNA) and 33 different proteins. uS9c binds directly to 16S ribosomal RNA. uS9c interacts with translation factor pY (PSRP1).

It localises to the plastid. It is found in the chloroplast. Component of the chloroplast ribosome (chloro-ribosome), a dedicated translation machinery responsible for the synthesis of chloroplast genome-encoded proteins, including proteins of the transcription and translation machinery and components of the photosynthetic apparatus. This Spinacia oleracea (Spinach) protein is Small ribosomal subunit protein uS9c (PRPS9).